The primary structure comprises 327 residues: BarH-like 1 homeobox protein (327 aa).

3 disordered regions span residues 1-90, 112-184, and 305-327; these read MEGS…AQSR, APYS…ARTA, and GASEPPPPLPPLAGVLPRAAQPR. Low complexity predominate over residues 33-54; sequence RSPLELSPRSESSSDCSSPASP. The span at 79-90 shows a compositional bias: polar residues; that stretch reads QPGQLSAPAQSR. 2 stretches are compositionally biased toward basic and acidic residues: residues 133–143 and 152–166; these read AAEDFRDKLDK and SEYKVKEEGDREISS. The segment at residues 178-237 is a DNA-binding region (homeobox); sequence PRKARTAFTDHQLAQLERSFERQKYLSVQDRMELAASLNLTDTQVKTWYQNRRTKWKRQT. The span at 316-327 shows a compositional bias: low complexity; it reads LAGVLPRAAQPR.

It belongs to the BAR homeobox family.

It is found in the nucleus. This is BarH-like 1 homeobox protein (BARHL1) from Homo sapiens (Human).